The chain runs to 158 residues: NAD(P)H-quinone oxidoreductase subunit N (158 aa).

Belongs to the complex I NdhN subunit family. As to quaternary structure, NDH-1 can be composed of about 15 different subunits; different subcomplexes with different compositions have been identified which probably have different functions.

It localises to the cellular thylakoid membrane. The enzyme catalyses a plastoquinone + NADH + (n+1) H(+)(in) = a plastoquinol + NAD(+) + n H(+)(out). It carries out the reaction a plastoquinone + NADPH + (n+1) H(+)(in) = a plastoquinol + NADP(+) + n H(+)(out). Functionally, NDH-1 shuttles electrons from an unknown electron donor, via FMN and iron-sulfur (Fe-S) centers, to quinones in the respiratory and/or the photosynthetic chain. The immediate electron acceptor for the enzyme in this species is believed to be plastoquinone. Couples the redox reaction to proton translocation, and thus conserves the redox energy in a proton gradient. Cyanobacterial NDH-1 also plays a role in inorganic carbon-concentration. The polypeptide is NAD(P)H-quinone oxidoreductase subunit N (Prochlorococcus marinus (strain MIT 9301)).